The primary structure comprises 93 residues: Cell division protein FtsB (93 aa).

The Cytoplasmic portion of the chain corresponds to 1 to 3 (MRL). A helical transmembrane segment spans residues 4–21 (FILSLFALLVMFQYDFWF). The Periplasmic segment spans residues 22–93 (GKNGYLDYQD…FYRIVKNKNR (72 aa)). Residues 28-76 (DYQDIKAEIIQRKQENKKLSQRNQTIFAEIQDLKNGIEAIEERARMEHE) adopt a coiled-coil conformation.

The protein belongs to the FtsB family. In terms of assembly, part of a complex composed of FtsB, FtsL and FtsQ.

The protein resides in the cell inner membrane. Functionally, essential cell division protein. May link together the upstream cell division proteins, which are predominantly cytoplasmic, with the downstream cell division proteins, which are predominantly periplasmic. This chain is Cell division protein FtsB, found in Histophilus somni (strain 129Pt) (Haemophilus somnus).